Consider the following 456-residue polypeptide: Phosphomethylpyrimidine synthase (456 aa).

Residues Asn80, Met109, Tyr139, His175, 195–197 (SRG), 236–239 (DSLR), and Glu275 each bind substrate. His279 is a Zn(2+) binding site. Substrate is bound at residue Tyr302. Residue His343 coordinates Zn(2+). Cys423, Cys426, and Cys431 together coordinate [4Fe-4S] cluster.

This sequence belongs to the ThiC family. It depends on [4Fe-4S] cluster as a cofactor.

The enzyme catalyses 5-amino-1-(5-phospho-beta-D-ribosyl)imidazole + S-adenosyl-L-methionine = 4-amino-2-methyl-5-(phosphooxymethyl)pyrimidine + CO + 5'-deoxyadenosine + formate + L-methionine + 3 H(+). The protein operates within cofactor biosynthesis; thiamine diphosphate biosynthesis. Catalyzes the synthesis of the hydroxymethylpyrimidine phosphate (HMP-P) moiety of thiamine from aminoimidazole ribotide (AIR) in a radical S-adenosyl-L-methionine (SAM)-dependent reaction. This is Phosphomethylpyrimidine synthase from Prochlorococcus marinus (strain AS9601).